We begin with the raw amino-acid sequence, 483 residues long: Glycogen synthase (483 aa).

Residue K15 coordinates ADP-alpha-D-glucose.

This sequence belongs to the glycosyltransferase 1 family. Bacterial/plant glycogen synthase subfamily.

It carries out the reaction [(1-&gt;4)-alpha-D-glucosyl](n) + ADP-alpha-D-glucose = [(1-&gt;4)-alpha-D-glucosyl](n+1) + ADP + H(+). The protein operates within glycan biosynthesis; glycogen biosynthesis. Its function is as follows. Synthesizes alpha-1,4-glucan chains using ADP-glucose. The protein is Glycogen synthase of Thioalkalivibrio sulfidiphilus (strain HL-EbGR7).